Reading from the N-terminus, the 118-residue chain is DNA-binding protein Msp_0595 (118 aa).

Residues 15–44 show a composition bias toward low complexity; the sequence is LKQQQLAAQQQQGASLEQMQQEEQARQQFE. The segment at 15–45 is disordered; that stretch reads LKQQQLAAQQQQGASLEQMQQEEQARQQFEN.

The protein belongs to the PDCD5 family.

This is DNA-binding protein Msp_0595 from Methanosphaera stadtmanae (strain ATCC 43021 / DSM 3091 / JCM 11832 / MCB-3).